The primary structure comprises 61 residues: MKFLLFLSVALLLTSFIETEAGPVNEAGVERLFRALVGRGCPADCPNTCDSSNKCSPGFPG.

Residues 1–21 form the signal peptide; the sequence is MKFLLFLSVALLLTSFIETEA. A propeptide spanning residues 22–38 is cleaved from the precursor; sequence GPVNEAGVERLFRALVG. Residue proline 57 is modified to 4-hydroxyproline; partial. Proline 60 bears the Proline amide mark.

In terms of processing, contains 2 disulfide bonds. In terms of tissue distribution, expressed by the venom duct.

It localises to the secreted. Probable neurotoxin with unknown target. Possibly targets ion channels. In Californiconus californicus (California cone), this protein is Conotoxin Cal14.6.